The sequence spans 24 residues: FLPFIARLAAKVFPSIICSVTKKC.

A disulfide bridge connects residues C18 and C24.

The protein belongs to the frog skin active peptide (FSAP) family. Ranatuerin subfamily. In terms of tissue distribution, expressed by the skin glands.

It is found in the secreted. In terms of biological role, antibacterial activity against Gram-positive bacterium S.aureus (MIC=55 uM). Shows no detectable hemolytic activity towards human erythrocytes. This Aquarana catesbeiana (American bullfrog) protein is Ranatuerin-4.